Here is a 231-residue protein sequence, read N- to C-terminus: Small ribosomal subunit protein uS2 (231 aa).

Belongs to the universal ribosomal protein uS2 family.

In Blochmanniella floridana, this protein is Small ribosomal subunit protein uS2.